Reading from the N-terminus, the 167-residue chain is uncharacterized protein (167 aa).

This is an uncharacterized protein from Magallana gigas (Pacific oyster).